The sequence spans 632 residues: MTHEFTESYDVIVIGAGHAGVEASLATSRMGCKTLLATINLDMLAFMPCNPSIGGSAKGIVVREIDALGGEMGKNIDKTYIQMKMLNTGKGPAVRALRAQADKSLYAREMKHTVEKQANLTLRQTMIDDILVEDGRVVGVLTATGQKFAAKAVVVTTGTALRGEIILGELKYSSGPNNSLASVTLADNLKKLGLEIGRFKTGTPPRVKASSINYDQTEIQPGDDKPNHFSFMSKDAEYLKDQIPCWLTYTNQTSHDIINQNLYRAPMFSGIVKGVGPRYCPSIEDKIVRFADKERHQLFLEPEGRDTEEVYVQGLSTSLPEDVQKDLIHSIKGLEKAEMMRTGYAIEYDIVLPHQLRATLETKLISGLFTAGQTNGTSGYEEAAGQGLIAGINAALKVQGKPELILKRSDAYIGVMIDDLVTKGTLEPYRLLTSRAEYRLILRHDNADMRLTEIGRDIGLVDDERWKAFEIKKNQFDNELKRLNSIKLKPVKATNDRVQELGFKPLTDAMTAKEFMRRPEIDYATAVSFVGPAAEDLDAKIIELLETEIKYEGYIRKALDQVAKMKRMEEKRIPANIDWDAIDSIATEARQKFKKINPETIGQASRISGVNPADISILMIYLEGNGKAHRKY.

FAD contacts are provided by residues 15–20 (GAGHAG), Ile-127, and Ser-182. 276-290 (GPRYCPSIEDKIVRF) contacts NAD(+). Gln-373 is a binding site for FAD.

The protein belongs to the MnmG family. As to quaternary structure, homodimer. Heterotetramer of two MnmE and two MnmG subunits. FAD serves as cofactor.

It is found in the cytoplasm. Its function is as follows. NAD-binding protein involved in the addition of a carboxymethylaminomethyl (cmnm) group at the wobble position (U34) of certain tRNAs, forming tRNA-cmnm(5)s(2)U34. The chain is tRNA uridine 5-carboxymethylaminomethyl modification enzyme MnmG from Streptococcus pyogenes serotype M28 (strain MGAS6180).